The following is a 241-amino-acid chain: Cytochrome b6-f complex iron-sulfur subunit 2, cyanelle (241 aa).

Residues 1 to 62 (MSAFACSAVA…AAKATTFSIS (62 aa)) constitute a cyanelle transit peptide. Residues 83–103 (LLGAIAGPTIGAGGPFVSFLV) traverse the membrane as a helical segment. Residues 127-223 (VEKWLETXKP…VNVLEDGVVA (97 aa)) form the Rieske domain. Residues C169, H171, C187, and H190 each coordinate [2Fe-2S] cluster. C174 and C189 are oxidised to a cystine.

It belongs to the Rieske iron-sulfur protein family. In terms of assembly, the 4 large subunits of the cytochrome b6-f complex are cytochrome b6, subunit IV (17 kDa polypeptide, petD), cytochrome f and the Rieske protein, while the 4 small subunits are petG, petL, petM and petN. The complex functions as a dimer. Requires [2Fe-2S] cluster as cofactor.

It is found in the plastid. It localises to the cyanelle thylakoid membrane. The enzyme catalyses 2 oxidized [plastocyanin] + a plastoquinol + 2 H(+)(in) = 2 reduced [plastocyanin] + a plastoquinone + 4 H(+)(out). Component of the cytochrome b6-f complex, which mediates electron transfer between photosystem II (PSII) and photosystem I (PSI), cyclic electron flow around PSI, and state transitions. This chain is Cytochrome b6-f complex iron-sulfur subunit 2, cyanelle (petC-2), found in Cyanophora paradoxa.